The following is a 393-amino-acid chain: MDLFEYQAKELFAKHGVPGIQGRVTDSAEGAKTIAMEIGRPVMVKAQVKTGGRGKAGGVKYAATPEEAYQQAKNILGLDIKGHIVKKLLVVEASDIAEEYYLSFLLDRANRTYLAMCSVEGGMEIEEVAATKPERLAKVSVDAVKGVDLACARSIAQQGHLPAEVLDAAAATIAKLWELFVAEDATLVEVNPLVRTPSRGYGSSGKILALDGKVTLDANARFRQPGHAEFEDRAATDPLEWKAKQHNLNYIKLDGEVGIIGNGAGLTMSTFDVVAYAGEQHGGVKPANFLDIGGGASAEVMAASLDVVLGDVQVKSVFVNIFGGITTCDTVATGIVKALEILGDEANKPLVVRLDGNNVGEGRRILAEANHPLVMLVPTMDEAANKAAELART.

In terms of domain architecture, ATP-grasp spans 9 to 242 (KELFAKHGVP…RAATDPLEWK (234 aa)). ATP contacts are provided by residues lysine 45, 52-54 (GRG), serine 94, and glutamate 99. Asparagine 191 and aspartate 211 together coordinate Mg(2+). Substrate contacts are provided by residues asparagine 262 and 324–326 (GIT).

This sequence belongs to the succinate/malate CoA ligase beta subunit family. As to quaternary structure, heterotetramer of two alpha and two beta subunits. Requires Mg(2+) as cofactor.

It catalyses the reaction succinate + ATP + CoA = succinyl-CoA + ADP + phosphate. The enzyme catalyses GTP + succinate + CoA = succinyl-CoA + GDP + phosphate. The protein operates within carbohydrate metabolism; tricarboxylic acid cycle; succinate from succinyl-CoA (ligase route): step 1/1. In terms of biological role, succinyl-CoA synthetase functions in the citric acid cycle (TCA), coupling the hydrolysis of succinyl-CoA to the synthesis of either ATP or GTP and thus represents the only step of substrate-level phosphorylation in the TCA. The beta subunit provides nucleotide specificity of the enzyme and binds the substrate succinate, while the binding sites for coenzyme A and phosphate are found in the alpha subunit. In Mycobacterium leprae (strain Br4923), this protein is Succinate--CoA ligase [ADP-forming] subunit beta.